The sequence spans 285 residues: Ribosomal RNA small subunit methyltransferase A (285 aa).

Positions 29, 31, 56, 77, 102, and 123 each coordinate S-adenosyl-L-methionine.

The protein belongs to the class I-like SAM-binding methyltransferase superfamily. rRNA adenine N(6)-methyltransferase family. RsmA subfamily.

Its subcellular location is the cytoplasm. The enzyme catalyses adenosine(1518)/adenosine(1519) in 16S rRNA + 4 S-adenosyl-L-methionine = N(6)-dimethyladenosine(1518)/N(6)-dimethyladenosine(1519) in 16S rRNA + 4 S-adenosyl-L-homocysteine + 4 H(+). Functionally, specifically dimethylates two adjacent adenosines (A1518 and A1519) in the loop of a conserved hairpin near the 3'-end of 16S rRNA in the 30S particle. May play a critical role in biogenesis of 30S subunits. The polypeptide is Ribosomal RNA small subunit methyltransferase A (Clostridium perfringens (strain ATCC 13124 / DSM 756 / JCM 1290 / NCIMB 6125 / NCTC 8237 / Type A)).